The following is a 1462-amino-acid chain: Gag-Pol polyprotein (1462 aa).

Residue glycine 2 is the site of N-myristoyl glycine; by host attachment. The interaction with Gp41 stretch occupies residues 7–31 (VLRGKKADELEKVRLRPNGKKRYRL). The Nuclear export signal motif lies at 16–22 (LEKVRLR). The Nuclear localization signal signature appears at 26–32 (KKRYRLK). The interval 191 to 228 (NCVGDHQAAMQIIREIINEEAADWDAQHPIPGPLPAGQ) is interaction with human PPIA/CYPA and NUP153. The tract at residues 279-365 (YNPTNILDVK…GGPSQKARLM (87 aa)) is dimerization/Multimerization of capsid protein p24. CCHC-type zinc fingers lie at residues 389 to 406 (IRCW…QCRA) and 410 to 427 (QGCW…NCPE). A disordered region spans residues 433–509 (LDGPTGKAAP…DAPQRGDRGL (77 aa)). Polar residues predominate over residues 448–465 (PSSSGADTNSTPNRSSSG). Basic and acidic residues-rich tracts occupy residues 472–482 (AAREKAERAEG) and 497–507 (AGRDAPQRGDR). Residues 512–516 (PQFSL) form a dimerization of protease region. In terms of domain architecture, Peptidase A2 spans 532-601 (EVLLDTGADD…PINIFGRNIL (70 aa)). Aspartate 536 (for protease activity; shared with dimeric partner) is an active-site residue. Dimerization of protease regions lie at residues 560-566 (GIGGFIN) and 599-611 (NILA…LNLP). Positions 655–845 (GQLEEAPPTN…PFQWMGYELW (191 aa)) constitute a Reverse transcriptase domain. Mg(2+) is bound by residues aspartate 720, aspartate 795, and aspartate 796. Residues 837–845 (FQWMGYELW) are RT 'primer grip'. A Tryptophan repeat motif motif is present at residues 1007-1023 (WEQWWDNYWQVTWVPEW). Residues 1043–1166 (IPGTETFYTD…VDHLVSQGIR (124 aa)) form the RNase H type-1 domain. Mg(2+)-binding residues include aspartate 1052, glutamate 1087, aspartate 1107, and aspartate 1158. Residues 1172–1213 (EKIEPAQEEHEKYHSNIKELTHKFGIPQLVARQIVNTCAQCQ) form an Integrase-type zinc finger. Zn(2+) contacts are provided by histidine 1181, histidine 1185, cysteine 1209, and cysteine 1212. An Integrase catalytic domain is found at 1223–1374 (VNAEIGVWQM…PAERLINMIT (152 aa)). The Mg(2+) site is built by aspartate 1233, aspartate 1285, and glutamate 1321. The integrase-type DNA-binding region spans 1392-1439 (FQVYYREGRDQLWKGPGELLWKGDGAVIVKVGADIKVVPRRKAKIIRD).

Homotrimer; further assembles as hexamers of trimers. Interacts with gp41 (via C-terminus). Interacts with host CALM1; this interaction induces a conformational change in the Matrix protein, triggering exposure of the myristate group. Interacts with host AP3D1; this interaction allows the polyprotein trafficking to multivesicular bodies during virus assembly. Part of the pre-integration complex (PIC) which is composed of viral genome, matrix protein, Vpr and integrase. In terms of assembly, homodimer; the homodimer further multimerizes as homohexamers or homopentamers. Interacts with human PPIA/CYPA. Interacts with human NUP153. Interacts with host PDZD8; this interaction stabilizes the capsid. Interacts with monkey TRIM5; this interaction destabilizes the capsid. As to quaternary structure, homodimer, whose active site consists of two apposed aspartic acid residues. Heterodimer of p66 RT and p51 RT (RT p66/p51). Heterodimerization of RT is essential for DNA polymerase activity. The overall folding of the subdomains is similar in p66 RT and p51 RT but the spatial arrangements of the subdomains are dramatically different. In terms of assembly, homotetramer; may further associate as a homohexadecamer. Part of the pre-integration complex (PIC) which is composed of viral genome, matrix protein, Vpr and integrase. Interacts with human SMARCB1/INI1 and human PSIP1/LEDGF isoform 1. Interacts with human KPNA3; this interaction might play a role in nuclear import of the pre-integration complex. Interacts with human NUP153; this interaction might play a role in nuclear import of the pre-integration complex. It depends on Mg(2+) as a cofactor. Specific enzymatic cleavages by the viral protease yield mature proteins. The protease is released by autocatalytic cleavage. The polyprotein is cleaved during and after budding, this process is termed maturation. Proteolytic cleavage of p66 RT removes the RNase H domain to yield the p51 RT subunit. Nucleocapsid protein p7 might be further cleaved after virus entry.

It is found in the host cell membrane. It localises to the host endosome. The protein resides in the host multivesicular body. Its subcellular location is the virion membrane. The protein localises to the host nucleus. It is found in the host cytoplasm. It localises to the virion. The enzyme catalyses Endopeptidase for which the P1 residue is preferably hydrophobic.. It catalyses the reaction Endohydrolysis of RNA in RNA/DNA hybrids. Three different cleavage modes: 1. sequence-specific internal cleavage of RNA. Human immunodeficiency virus type 1 and Moloney murine leukemia virus enzymes prefer to cleave the RNA strand one nucleotide away from the RNA-DNA junction. 2. RNA 5'-end directed cleavage 13-19 nucleotides from the RNA end. 3. DNA 3'-end directed cleavage 15-20 nucleotides away from the primer terminus.. It carries out the reaction 3'-end directed exonucleolytic cleavage of viral RNA-DNA hybrid.. The catalysed reaction is DNA(n) + a 2'-deoxyribonucleoside 5'-triphosphate = DNA(n+1) + diphosphate. Protease: The viral protease is inhibited by many synthetic protease inhibitors (PIs), such as amprenavir, atazanavir, indinavir, loprinavir, nelfinavir, ritonavir and saquinavir. Use of protease inhibitors in tritherapy regimens permit more ambitious therapeutic strategies. Reverse transcriptase/ribonuclease H: RT can be inhibited either by nucleoside RT inhibitors (NRTIs) or by non nucleoside RT inhibitors (NNRTIs). NRTIs act as chain terminators, whereas NNRTIs inhibit DNA polymerization by binding a small hydrophobic pocket near the RT active site and inducing an allosteric change in this region. Classical NRTIs are abacavir, adefovir (PMEA), didanosine (ddI), lamivudine (3TC), stavudine (d4T), tenofovir (PMPA), zalcitabine (ddC), and zidovudine (AZT). Classical NNRTIs are atevirdine (BHAP U-87201E), delavirdine, efavirenz (DMP-266), emivirine (I-EBU), and nevirapine (BI-RG-587). The tritherapies used as a basic effective treatment of AIDS associate two NRTIs and one NNRTI. Functionally, mediates, with Gag polyprotein, the essential events in virion assembly, including binding the plasma membrane, making the protein-protein interactions necessary to create spherical particles, recruiting the viral Env proteins, and packaging the genomic RNA via direct interactions with the RNA packaging sequence (Psi). Gag-Pol polyprotein may regulate its own translation, by the binding genomic RNA in the 5'-UTR. At low concentration, the polyprotein would promote translation, whereas at high concentration, the polyprotein would encapsidate genomic RNA and then shut off translation. In terms of biological role, targets the polyprotein to the plasma membrane via a multipartite membrane-binding signal, that includes its myristoylated N-terminus. Matrix protein is part of the pre-integration complex. Implicated in the release from host cell mediated by Vpu. Binds to RNA. Forms the conical core that encapsulates the genomic RNA-nucleocapsid complex in the virion. Most core are conical, with only 7% tubular. The core is constituted by capsid protein hexamer subunits. The core is disassembled soon after virion entry. Host restriction factors such as TRIM5-alpha or TRIMCyp bind retroviral capsids and cause premature capsid disassembly, leading to blocks in reverse transcription. Capsid restriction by TRIM5 is one of the factors which restricts HIV-1 to the human species. Host PIN1 apparently facilitates the virion uncoating. On the other hand, interactions with PDZD8 or CYPA stabilize the capsid. Its function is as follows. Encapsulates and protects viral dimeric unspliced genomic RNA (gRNA). Binds these RNAs through its zinc fingers. Acts as a nucleic acid chaperone which is involved in rearangement of nucleic acid secondary structure during gRNA retrotranscription. Also facilitates template switch leading to recombination. As part of the polyprotein, participates in gRNA dimerization, packaging, tRNA incorporation and virion assembly. Functionally, aspartyl protease that mediates proteolytic cleavages of Gag and Gag-Pol polyproteins during or shortly after the release of the virion from the plasma membrane. Cleavages take place as an ordered, step-wise cascade to yield mature proteins. This process is called maturation. Displays maximal activity during the budding process just prior to particle release from the cell. Also cleaves Nef and Vif, probably concomitantly with viral structural proteins on maturation of virus particles. Hydrolyzes host EIF4GI and PABP1 in order to shut off the capped cellular mRNA translation. The resulting inhibition of cellular protein synthesis serves to ensure maximal viral gene expression and to evade host immune response. In terms of biological role, multifunctional enzyme that converts the viral RNA genome into dsDNA in the cytoplasm, shortly after virus entry into the cell. This enzyme displays a DNA polymerase activity that can copy either DNA or RNA templates, and a ribonuclease H (RNase H) activity that cleaves the RNA strand of RNA-DNA heteroduplexes in a partially processive 3' to 5' endonucleasic mode. Conversion of viral genomic RNA into dsDNA requires many steps. A tRNA(3)-Lys binds to the primer-binding site (PBS) situated at the 5'-end of the viral RNA. RT uses the 3' end of the tRNA primer to perform a short round of RNA-dependent minus-strand DNA synthesis. The reading proceeds through the U5 region and ends after the repeated (R) region which is present at both ends of viral RNA. The portion of the RNA-DNA heteroduplex is digested by the RNase H, resulting in a ssDNA product attached to the tRNA primer. This ssDNA/tRNA hybridizes with the identical R region situated at the 3' end of viral RNA. This template exchange, known as minus-strand DNA strong stop transfer, can be either intra- or intermolecular. RT uses the 3' end of this newly synthesized short ssDNA to perform the RNA-dependent minus-strand DNA synthesis of the whole template. RNase H digests the RNA template except for two polypurine tracts (PPTs) situated at the 5'-end and near the center of the genome. It is not clear if both polymerase and RNase H activities are simultaneous. RNase H probably can proceed both in a polymerase-dependent (RNA cut into small fragments by the same RT performing DNA synthesis) and a polymerase-independent mode (cleavage of remaining RNA fragments by free RTs). Secondly, RT performs DNA-directed plus-strand DNA synthesis using the PPTs that have not been removed by RNase H as primers. PPTs and tRNA primers are then removed by RNase H. The 3' and 5' ssDNA PBS regions hybridize to form a circular dsDNA intermediate. Strand displacement synthesis by RT to the PBS and PPT ends produces a blunt ended, linear dsDNA copy of the viral genome that includes long terminal repeats (LTRs) at both ends. Catalyzes viral DNA integration into the host chromosome, by performing a series of DNA cutting and joining reactions. This enzyme activity takes place after virion entry into a cell and reverse transcription of the RNA genome in dsDNA. The first step in the integration process is 3' processing. This step requires a complex comprising the viral genome, matrix protein, Vpr and integrase. This complex is called the pre-integration complex (PIC). The integrase protein removes 2 nucleotides from each 3' end of the viral DNA, leaving recessed CA OH's at the 3' ends. In the second step, the PIC enters cell nucleus. This process is mediated through integrase and Vpr proteins, and allows the virus to infect a non dividing cell. This ability to enter the nucleus is specific of lentiviruses, other retroviruses cannot and rely on cell division to access cell chromosomes. In the third step, termed strand transfer, the integrase protein joins the previously processed 3' ends to the 5' ends of strands of target cellular DNA at the site of integration. The 5'-ends are produced by integrase-catalyzed staggered cuts, 5 bp apart. A Y-shaped, gapped, recombination intermediate results, with the 5'-ends of the viral DNA strands and the 3' ends of target DNA strands remaining unjoined, flanking a gap of 5 bp. The last step is viral DNA integration into host chromosome. This involves host DNA repair synthesis in which the 5 bp gaps between the unjoined strands are filled in and then ligated. Since this process occurs at both cuts flanking the HIV genome, a 5 bp duplication of host DNA is produced at the ends of HIV-1 integration. Alternatively, Integrase may catalyze the excision of viral DNA just after strand transfer, this is termed disintegration. This Human immunodeficiency virus type 2 subtype A (isolate D194) (HIV-2) protein is Gag-Pol polyprotein (gag-pol).